Consider the following 364-residue polypeptide: MQERHTEQDYRALLIADTPIIDVRAPVEFEQGAMPAAINLPLMNNDERAAVGTCYKQQGSDAALALGHKLVAGEIRQQRMDAWRAACLQNPQGILCCARGGQRSHIVQRWLHEAGIDYPLVEGGYKALRQTAIQATIELAQKPIVLIGGCTGCGKTLLVQQQPNGVDLEGLARHRGSAFGRTLQPQLSQASFENLLAAEMLKTDARQELRLWVLEDESRMIGSNHLPECLRERMTQAAIAVVEDPFEIRLERLNEEYFLRMHHDFIHAYGDEQGWQEYCEYLHHGLSAIKRRLGLQRYNELATRLDAALTTQLATGSTDGHLAWLVPLLEEYYDPMYRYQLEKKAEKVVFRGEWAEVAEWVKAQ.

Residues 14–137 form the Rhodanese domain; it reads LIADTPIIDV…LRQTAIQATI (124 aa). Cysteine 97 (S-selanylcysteine intermediate) is an active-site residue.

Belongs to the SelU family. Monomer.

It carries out the reaction 5-methylaminomethyl-2-thiouridine(34) in tRNA + selenophosphate + (2E)-geranyl diphosphate + H2O + H(+) = 5-methylaminomethyl-2-selenouridine(34) in tRNA + (2E)-thiogeraniol + phosphate + diphosphate. The catalysed reaction is 5-methylaminomethyl-2-thiouridine(34) in tRNA + (2E)-geranyl diphosphate = 5-methylaminomethyl-S-(2E)-geranyl-thiouridine(34) in tRNA + diphosphate. The enzyme catalyses 5-methylaminomethyl-S-(2E)-geranyl-thiouridine(34) in tRNA + selenophosphate + H(+) = 5-methylaminomethyl-2-(Se-phospho)selenouridine(34) in tRNA + (2E)-thiogeraniol. It catalyses the reaction 5-methylaminomethyl-2-(Se-phospho)selenouridine(34) in tRNA + H2O = 5-methylaminomethyl-2-selenouridine(34) in tRNA + phosphate. In terms of biological role, involved in the post-transcriptional modification of the uridine at the wobble position (U34) of tRNA(Lys), tRNA(Glu) and tRNA(Gln). Catalyzes the conversion of 2-thiouridine (S2U-RNA) to 2-selenouridine (Se2U-RNA). Acts in a two-step process involving geranylation of 2-thiouridine (S2U) to S-geranyl-2-thiouridine (geS2U) and subsequent selenation of the latter derivative to 2-selenouridine (Se2U) in the tRNA chain. In Escherichia fergusonii (strain ATCC 35469 / DSM 13698 / CCUG 18766 / IAM 14443 / JCM 21226 / LMG 7866 / NBRC 102419 / NCTC 12128 / CDC 0568-73), this protein is tRNA 2-selenouridine synthase.